The chain runs to 90 residues: Small ribosomal subunit protein uS15 (90 aa).

It belongs to the universal ribosomal protein uS15 family. Part of the 30S ribosomal subunit. Forms a bridge to the 50S subunit in the 70S ribosome, contacting the 23S rRNA.

Functionally, one of the primary rRNA binding proteins, it binds directly to 16S rRNA where it helps nucleate assembly of the platform of the 30S subunit by binding and bridging several RNA helices of the 16S rRNA. Forms an intersubunit bridge (bridge B4) with the 23S rRNA of the 50S subunit in the ribosome. This is Small ribosomal subunit protein uS15 from Helicobacter pylori (strain P12).